Reading from the N-terminus, the 181-residue chain is uncharacterized protein (181 aa).

The N-terminal stretch at 1–19 (MRRLLACSAGVLCFSQLGA) is a signal peptide.

This is an uncharacterized protein from Treponema pallidum (strain Nichols).